The primary structure comprises 786 residues: Aculeacin-A acylase (786 aa).

An N-terminal signal peptide occupies residues 1 to 22 (MTSSYMRLKAAAIAFGVIVATA). The propeptide occupies 23 to 34 (AVPSPASGREHD). A substrate-binding region spans residues 35–130 (GGYAALIRRA…PRDGVRAPCD (96 aa)). A propeptide spans 215 to 229 (AAIAAALDGTSAGIG) (spacer peptide). A possible recognition-sequence of an AAC processing enzyme region spans residues 220-239 (ALDGTSAGIGSNAYGLGAQA). The Nucleophile role is filled by Ser-230. The tract at residues 658 to 689 (ACNGSPASPSTRSVGDIHTDSRGERRIPIHGG) is disordered. The span at 672 to 684 (GDIHTDSRGERRI) shows a compositional bias: basic and acidic residues.

This sequence belongs to the peptidase S45 family. In terms of assembly, heterodimer of a small subunit and a large subunit processed from the same precursor.

Its subcellular location is the secreted. Catalyzes the hydrolysis of the palmitoyl moiety of the antifungal antibiotic, aculeacin-A, giving a hexapeptide moiety and a long chain fatty acid. The chain is Aculeacin-A acylase (aac) from Actinoplanes utahensis.